We begin with the raw amino-acid sequence, 191 residues long: RRP15-like protein (191 aa).

Positions 1–11 (MSTKNRDRLVV) are enriched in basic and acidic residues. The interval 1-52 (MSTKNRDRLVVTEDSDDDNEREEMSSGGESGEEGPSSVDGGAGDADETVAFP) is disordered. Positions 53 to 84 (AIERRKKKVIKKLTKKEQSLKKSVKEYRIKLA) form a coiled coil. Residues 119–153 (QKTMSDAVKEKMTARERREARQRFDGKNFDSDRFA) are compositionally biased toward basic and acidic residues. Positions 119–191 (QKTMSDAVKE…IDTGNYSDED (73 aa)) are disordered. Residues 166–191 (GEDDDGEDQMDIGEEQIDTGNYSDED) show a composition bias toward acidic residues.

It belongs to the RRP15 family.

In Caenorhabditis elegans, this protein is RRP15-like protein.